A 1297-amino-acid polypeptide reads, in one-letter code: Cingulin-like protein 1 (1297 aa).

The head stretch occupies residues M1 to T550. A ZIM motif is present at residues A37–G51. A phosphoserine mark is found at S113, S203, and S257. Disordered stretches follow at residues N161–D208, G245–S306, K364–F396, and Q428–V467. The segment covering Y197–S206 has biased composition (polar residues). Positions E268 to D283 are enriched in basic and acidic residues. 3 positions are modified to phosphoserine: S284, S298, and S299. Low complexity predominate over residues S297–S306. Residues L367 to R378 show a composition bias toward basic residues. The segment covering I379–S389 has biased composition (basic and acidic residues). S389 and S392 each carry phosphoserine. S482 is modified (phosphoserine). Positions S586–L608 are disordered. The segment covering A592–L608 has biased composition (polar residues). Positions E604–K1251 form a coiled coil. Phosphoserine occurs at positions 678 and 704. The interval S1259–I1297 is tail.

It belongs to the cingulin family. As to quaternary structure, homodimer or oligomer. Interacts with CD2AP and SH3BP1; probably part of a complex at cell junctions. As to expression, widely expressed. Highly expressed in the kidney and lung.

It localises to the cell junction. The protein resides in the tight junction. May be involved in anchoring the apical junctional complex, especially tight junctions, to actin-based cytoskeletons. This Mus musculus (Mouse) protein is Cingulin-like protein 1.